The sequence spans 473 residues: ATP synthase subunit beta (473 aa).

Residue 158-165 (GGAGVGKT) coordinates ATP.

Belongs to the ATPase alpha/beta chains family. As to quaternary structure, F-type ATPases have 2 components, CF(1) - the catalytic core - and CF(0) - the membrane proton channel. CF(1) has five subunits: alpha(3), beta(3), gamma(1), delta(1), epsilon(1). CF(0) has three main subunits: a(1), b(2) and c(9-12). The alpha and beta chains form an alternating ring which encloses part of the gamma chain. CF(1) is attached to CF(0) by a central stalk formed by the gamma and epsilon chains, while a peripheral stalk is formed by the delta and b chains.

It localises to the cell membrane. It catalyses the reaction ATP + H2O + 4 H(+)(in) = ADP + phosphate + 5 H(+)(out). Its function is as follows. Produces ATP from ADP in the presence of a proton gradient across the membrane. The catalytic sites are hosted primarily by the beta subunits. This is ATP synthase subunit beta from Geobacillus sp. (strain WCH70).